Here is a 266-residue protein sequence, read N- to C-terminus: Regulatory protein RecX (266 aa).

This sequence belongs to the RecX family.

The protein resides in the cytoplasm. Functionally, modulates RecA activity. This chain is Regulatory protein RecX, found in Levilactobacillus brevis (strain ATCC 367 / BCRC 12310 / CIP 105137 / JCM 1170 / LMG 11437 / NCIMB 947 / NCTC 947) (Lactobacillus brevis).